Reading from the N-terminus, the 407-residue chain is Chorismate synthase (407 aa).

Arg40 and Arg46 together coordinate NADP(+). Residues 135–137, 256–257, Gly300, 315–319, and Arg341 contribute to the FMN site; these read RAS, QA, and KPIST.

Belongs to the chorismate synthase family. As to quaternary structure, homotetramer. Requires FMNH2 as cofactor.

The enzyme catalyses 5-O-(1-carboxyvinyl)-3-phosphoshikimate = chorismate + phosphate. Its pathway is metabolic intermediate biosynthesis; chorismate biosynthesis; chorismate from D-erythrose 4-phosphate and phosphoenolpyruvate: step 7/7. In terms of biological role, catalyzes the anti-1,4-elimination of the C-3 phosphate and the C-6 proR hydrogen from 5-enolpyruvylshikimate-3-phosphate (EPSP) to yield chorismate, which is the branch point compound that serves as the starting substrate for the three terminal pathways of aromatic amino acid biosynthesis. This reaction introduces a second double bond into the aromatic ring system. The chain is Chorismate synthase from Mycobacterium leprae (strain Br4923).